A 106-amino-acid polypeptide reads, in one-letter code: UPF0145 protein SCO3412 (106 aa).

This sequence belongs to the UPF0145 family.

The protein is UPF0145 protein SCO3412 of Streptomyces coelicolor (strain ATCC BAA-471 / A3(2) / M145).